The following is a 139-amino-acid chain: Protein shisa-5 (139 aa).

Residues F3–L23 traverse the membrane as a helical segment.

The protein belongs to the shisa family.

It is found in the endoplasmic reticulum membrane. The protein resides in the nucleus membrane. In terms of biological role, can induce apoptosis in a caspase-dependent manner and plays a role in p53/TP53-dependent apoptosis. This chain is Protein shisa-5 (Shisa5), found in Gallus gallus (Chicken).